The following is a 253-amino-acid chain: Triosephosphate isomerase, cytosolic (253 aa).

Substrate-binding residues include asparagine 10 and lysine 12. Residue histidine 96 is the Electrophile of the active site. The Proton acceptor role is filled by glutamate 166.

This sequence belongs to the triosephosphate isomerase family. Homodimer. In terms of tissue distribution, starchy endosperm.

The protein resides in the cytoplasm. The catalysed reaction is D-glyceraldehyde 3-phosphate = dihydroxyacetone phosphate. It participates in carbohydrate biosynthesis; gluconeogenesis. Its pathway is carbohydrate degradation; glycolysis; D-glyceraldehyde 3-phosphate from glycerone phosphate: step 1/1. This is Triosephosphate isomerase, cytosolic from Hordeum vulgare (Barley).